Consider the following 636-residue polypeptide: Chaperone protein HtpG (636 aa).

Residues 1–349 are a; substrate-binding; it reads MAKHQFQTEV…SEDLPLNVSR (349 aa). A b region spans residues 350–562; the sequence is EILQENRILA…ADAQMAAMAH (213 aa). Residues 563–636 form a c region; sequence MFRAMGQAMP…RLSRITAKAL (74 aa).

It belongs to the heat shock protein 90 family. Homodimer.

The protein resides in the cytoplasm. Its function is as follows. Molecular chaperone. Has ATPase activity. This chain is Chaperone protein HtpG, found in Aliarcobacter butzleri (strain RM4018) (Arcobacter butzleri).